The chain runs to 320 residues: Malate dehydrogenase (320 aa).

Residues 10 to 15 (GSGMIG) and D34 each bind NAD(+). R83 and R89 together coordinate substrate. NAD(+)-binding positions include N96 and 119–121 (ITN). Substrate-binding residues include N121 and R152. H176 acts as the Proton acceptor in catalysis.

This sequence belongs to the LDH/MDH superfamily. MDH type 3 family.

It carries out the reaction (S)-malate + NAD(+) = oxaloacetate + NADH + H(+). Functionally, catalyzes the reversible oxidation of malate to oxaloacetate. This Maricaulis maris (strain MCS10) (Caulobacter maris) protein is Malate dehydrogenase.